The following is a 299-amino-acid chain: Taste receptor type 2 member 42 (299 aa).

Residues 1–7 are Extracellular-facing; it reads MATELDK. A helical transmembrane segment spans residues 8 to 28; sequence IFLILAIAEFIISMLGNVFIG. Residues 29–50 are Cytoplasmic-facing; sequence LVNCSEGIKNQKVFSSDFILTS. A helical transmembrane segment spans residues 51 to 71; it reads LAISTIGQLLVILFDSFLVGL. Residues 72-101 are Extracellular-facing; it reads ASHLYTTYRLGKPVIMLWHMTNHLTTWLAT. A helical transmembrane segment spans residues 102-122; that stretch reads CLSVFYFFKIAHFPHSLFLWL. Residues 123 to 127 lie on the Cytoplasmic side of the membrane; the sequence is RWRMN. A helical transmembrane segment spans residues 128–148; that stretch reads GMIAMLLILSLFLLIFDSSVL. At 149-187 the chain is on the extracellular side; that stretch reads EIFIDISLNIIDKSSLTLYLDESKTLYDKLSILKTLLSL. A helical membrane pass occupies residues 188-208; the sequence is TSFIPFSLSLTSVLFLYLSLV. Over 209 to 238 the chain is Cytoplasmic; the sequence is RHTRNLKLSSLGSRDSSTEAHRRAMKMVMS. Residues 239-259 form a helical membrane-spanning segment; sequence FLFLFIVHFFSLQVANWIFFM. Residues 260–265 are Extracellular-facing; it reads LWNNKY. Residues 266–286 form a helical membrane-spanning segment; sequence IKFVMLALNAFPSCHSFILIL. Topologically, residues 287–299 are cytoplasmic; the sequence is GNSKLRQTAVRLL.

Belongs to the G-protein coupled receptor T2R family.

It localises to the membrane. In terms of biological role, receptor that may play a role in the perception of bitterness and is gustducin-linked. May play a role in sensing the chemical composition of the gastrointestinal content. The activity of this receptor may stimulate alpha gustducin, mediate PLC-beta-2 activation and lead to the gating of TRPM5. The polypeptide is Taste receptor type 2 member 42 (TAS2R42) (Gorilla gorilla gorilla (Western lowland gorilla)).